The following is a 524-amino-acid chain: Keratin, type II cytoskeletal 71 (524 aa).

The segment at 1–130 is head; that stretch reads MSRQFTCKSG…DPEIQKVRAQ (130 aa). Residues 131–166 form a coil 1A region; the sequence is EREQIKALNNKFASFIDKVRFLEQQNQVLQTKWELL. The IF rod domain occupies 131-444; the sequence is EREQIKALNN…KLLESEECRM (314 aa). The interval 167 to 185 is linker 1; sequence QQLDLNNCKNNLEPILEGH. The interval 186 to 277 is coil 1B; it reads ISNMRKQLET…CLFEAEMAQI (92 aa). Residues 278-301 are linker 12; sequence QSHISDMSVILSMDNNRNLDLDSI. Residues 302-440 are coil 2; it reads IDEVRAQYEE…ATYRKLLESE (139 aa). The interval 441-524 is tail; it reads ECRMSGEYSS…LSTPSKKGGR (84 aa). A disordered region spans residues 493–524; that stretch reads GGENRSRGSASDYKDTLTKGSSLSTPSKKGGR. Residues 494-509 show a composition bias toward basic and acidic residues; sequence GENRSRGSASDYKDTL. Over residues 510–524 the composition is skewed to polar residues; it reads TKGSSLSTPSKKGGR.

Belongs to the intermediate filament family. In terms of assembly, heterodimer of a type I and a type II keratin. Associates with KRT16 and/or KRT17. As to expression, specifically expressed in the inner root sheath (IRS) of the hair follicle. Present in Henle and the Huxley layers of the IRS, while expression in the cuticle is unsure (at protein level).

It is found in the cytoplasm. It localises to the cytoskeleton. Its function is as follows. Plays a central role in hair formation. Essential component of keratin intermediate filaments in the inner root sheath (IRS) of the hair follicle. This is Keratin, type II cytoskeletal 71 (Krt71) from Mus musculus (Mouse).